A 219-amino-acid chain; its full sequence is Poxin (219 aa).

Catalysis depends on histidine 17, which acts as the Proton donor. The Shared with catalytic histidine of dimeric partner role is filled by tyrosine 138. Lysine 142 serves as the catalytic Proton acceptor; shared with catalytic histidine of dimeric partner.

It belongs to the poxin family. As to quaternary structure, homodimer.

The enzyme catalyses 2',3'-cGAMP + H2O = Gp(2'-5')Ap(3') + H(+). In terms of biological role, nuclease that is responsible for viral evasion of host cGAS-STING innate immunity. Cleaves 2',3'-cGAMP which is produced by host cGAS following recognition of cytosolic DNA and blocks the subsequent 2',3'-cGAMP-mediated activation of TMEM173/STING, which normally spreads to adjacent cells and activates the interferon and NF-kappa-B immune responses. This is Poxin (OPG188) from Bos taurus (Bovine).